The sequence spans 246 residues: DNA repair protein RecO (246 aa).

The protein belongs to the RecO family.

Its function is as follows. Involved in DNA repair and RecF pathway recombination. The sequence is that of DNA repair protein RecO from Pelobacter propionicus (strain DSM 2379 / NBRC 103807 / OttBd1).